A 658-amino-acid chain; its full sequence is Probable CoA ligase CCL6 (658 aa).

ATP is bound by residues 226–234 (TSGATGEPK), 411–416 (QGYGLT), D497, 509–512 (IIDR), and K632. The segment at 298 to 411 (DIRFLMDDLQ…RVTSCAALSQ (114 aa)) is SBD1. The SBD2 stretch occupies residues 412–477 (GYGLTESCGG…LRGTTLFSGY (66 aa)).

It belongs to the ATP-dependent AMP-binding enzyme family. In terms of tissue distribution, mostly expressed in glandular trichomes (lupulin glands) after flowering, and, to a lower extent, in stems, leaves, cones and flowers.

The protein localises to the cytoplasm. The protein resides in the cytosol. In Humulus lupulus (European hop), this protein is Probable CoA ligase CCL6.